The following is a 179-amino-acid chain: ATP-dependent protease subunit HslV (179 aa).

T6 is an active-site residue. Na(+)-binding residues include S164, C167, and T170.

It belongs to the peptidase T1B family. HslV subfamily. In terms of assembly, a double ring-shaped homohexamer of HslV is capped on each side by a ring-shaped HslU homohexamer. The assembly of the HslU/HslV complex is dependent on binding of ATP.

Its subcellular location is the cytoplasm. It catalyses the reaction ATP-dependent cleavage of peptide bonds with broad specificity.. With respect to regulation, allosterically activated by HslU binding. Functionally, protease subunit of a proteasome-like degradation complex believed to be a general protein degrading machinery. The sequence is that of ATP-dependent protease subunit HslV from Listeria monocytogenes serotype 4b (strain CLIP80459).